Consider the following 372-residue polypeptide: DNA replication and repair protein RecF (372 aa).

30-37 contacts ATP; it reads GENGQGKT.

Belongs to the RecF family.

It is found in the cytoplasm. The RecF protein is involved in DNA metabolism; it is required for DNA replication and normal SOS inducibility. RecF binds preferentially to single-stranded, linear DNA. It also seems to bind ATP. The protein is DNA replication and repair protein RecF of Anaeromyxobacter dehalogenans (strain 2CP-C).